The chain runs to 109 residues: Small ribosomal subunit protein bS6 (109 aa).

This sequence belongs to the bacterial ribosomal protein bS6 family.

In terms of biological role, binds together with bS18 to 16S ribosomal RNA. This chain is Small ribosomal subunit protein bS6, found in Ehrlichia chaffeensis (strain ATCC CRL-10679 / Arkansas).